A 560-amino-acid polypeptide reads, in one-letter code: Chaperonin GroEL 2 (560 aa).

Residues 29 to 32, Lys50, 86 to 90, Gly414, and Asp494 each bind ATP; these read TLGP and DGTTT. The disordered stretch occupies residues 524-546; it reads EDEDDDDGGGGGGGGMPAGGAGG. Positions 532-546 are enriched in gly residues; it reads GGGGGGGMPAGGAGG.

This sequence belongs to the chaperonin (HSP60) family. In terms of assembly, forms a cylinder of 14 subunits composed of two heptameric rings stacked back-to-back. Interacts with the co-chaperonin GroES.

Its subcellular location is the cytoplasm. The enzyme catalyses ATP + H2O + a folded polypeptide = ADP + phosphate + an unfolded polypeptide.. Its function is as follows. Together with its co-chaperonin GroES, plays an essential role in assisting protein folding. The GroEL-GroES system forms a nano-cage that allows encapsulation of the non-native substrate proteins and provides a physical environment optimized to promote and accelerate protein folding. This chain is Chaperonin GroEL 2, found in Salinibacter ruber (strain DSM 13855 / M31).